A 107-amino-acid chain; its full sequence is Quaternary ammonium compound-resistance protein QacG (107 aa).

Helical transmembrane passes span 1–21 (MHYL…SFLK), 26–46 (FTKL…FYFL), 57–77 (ITYA…SVIV), and 84–104 (LISI…NVFG).

The protein belongs to the drug/metabolite transporter (DMT) superfamily. Small multidrug resistance (SMR) (TC 2.A.7.1) family.

It localises to the cell membrane. Multidrug exporter. Is implicated for the resistance to bacteriocidal quaternary ammonium compounds. The polypeptide is Quaternary ammonium compound-resistance protein QacG (qacG) (Staphylococcus sp. (strain ST94)).